Reading from the N-terminus, the 819-residue chain is MPVAYTFPVLPSSCLLCGISNRSTSFVVDRPELQISGLLVVRSESGEFFGSGLSLRRFQREGRRRLNAAGGGIHVVDNAPSRTSSLAASTSTIELPVTCYQLIGVSEQAEKDEVVKSVINLKKTDAEEGYTMEAAAARQDLLMDVRDKLLFESEYAGNLKEKIAPKSPLRIPWAWLPGALCLLQEVGQEKLVLDIGRAALRNLDSKPYIHDIFLSMALAECAIAKAAFEVNKVSQGFEALARAQSFLKSKVTLGKLALLTQIEESLEELAPPCTLDLLGLPRTPENAERRRGAIAALRELLRQGLSVEASCQIQDWPCFLSQAISRLLATEIVDLLPWDDLAITRKNKKSLESHNQRVVIDFNCFYMVLLGHIAVGFSGKQNETINKAKTICECLIASEGVDLKFEEAFCSFLLKQGSEAEALEKLKQLESNSDSAVRNSILGKESRSTSATPSLEAWLMESVLANFPDTRGCSPSLANFFRAEKKYPENKKMGSPSIMNHKTNQRPLSTTQFVNSSQHLYTAVEQLTPTDLQSPVVSAKNNDETSASMPSVQLKRNLGVHKNKIWDEWLSQSSLIGRVSVVALLGCTVFFSLKLSGIRSGRLQSMPISVSARPHSESDSFLWKTESGNFRKNLDSVNRNGIVGNIKVLIDMLKMHCGEHPDALYLKSSGQSATSLSHSASELHKRPMDTEEAEELVRQWENVKAEALGPTHQVYSLSEVLDESMLVQWQTLAQTAEAKSCYWRFVLLHLEVLQAHIFEDGIAGEAAEIEALLEEAAELVDESQPKNAKYYSTYKIRYILKKQEDGLWKFCQSDIQIQK.

The transit peptide at 1–76 directs the protein to the chloroplast; it reads MPVAYTFPVL…NAAGGGIHVV (76 aa). Residues 77 to 572 are Stromal-facing; that stretch reads DNAPSRTSSL…NKIWDEWLSQ (496 aa). Residues 419-439 are a coiled coil; that stretch reads EAEALEKLKQLESNSDSAVRN. The chain crosses the membrane as a helical span at residues 573-593; it reads SSLIGRVSVVALLGCTVFFSL. The Chloroplast intermembrane segment spans residues 594–819; that stretch reads KLSGIRSGRL…FCQSDIQIQK (226 aa). Residues 762–782 are a coiled coil; it reads IAGEAAEIEALLEEAAELVDE.

Self-interacts. Interacts (via N-terminus) with ARC3 (via MORN domains). Binds (via N-terminus) to FTSZ2 proteins, FTSZ2-1 and FTSZ2-2. Recruited ARC3 to the middle of the plastid where subsequent complex made of CDP1/PARC6, ARC3 and FtsZ proteins can form; this complex enhances the dynamics of Z rings during chloroplast division. Interacts (via C-terminus) with PDV1 (via C-terminus). Interacts with MIND1. Exclusively expressed in young green tissues such as young cotyledons, shoot apex, emerging leaves and budding inflorescence.

It is found in the plastid. Its subcellular location is the chloroplast inner membrane. In terms of biological role, component of the plastid division machinery required for PDV1 localization to constriction sites. Involved in chloroplast division site placement. Required for the proper formation of FtsZ rings at the division site in nongreen plastids (e.g. etioplasts). Inhibits FtsZ assembly, functioning as an antagonistic regulator of FtsZ dynamics against ARC6, by recruiting ARC3 to the middle of the plastid to facilitate its interaction with FtsZ proteins. Required during stromule biogenesis in the leaf epidermis, especially in non-mesophyll cells plastids. This is Plastid division protein CDP1, chloroplastic from Arabidopsis thaliana (Mouse-ear cress).